The sequence spans 206 residues: Large ribosomal subunit protein uL13z (206 aa).

Belongs to the universal ribosomal protein uL13 family.

The protein is Large ribosomal subunit protein uL13z (RPL13AA) of Arabidopsis thaliana (Mouse-ear cress).